A 395-amino-acid chain; its full sequence is 8-amino-7-oxononanoate synthase (395 aa).

Pyridoxal 5'-phosphate is bound at residue 108–109; it reads GF. Substrate is bound at residue His134. Pyridoxal 5'-phosphate is bound by residues Ser184, 209–212, and 240–243; these read DDAH and TLSK. Position 243 is an N6-(pyridoxal phosphate)lysine (Lys243). Position 357 (Thr357) interacts with substrate.

The protein belongs to the class-II pyridoxal-phosphate-dependent aminotransferase family. BioF subfamily. Homodimer. Pyridoxal 5'-phosphate serves as cofactor.

The enzyme catalyses 6-carboxyhexanoyl-[ACP] + L-alanine + H(+) = (8S)-8-amino-7-oxononanoate + holo-[ACP] + CO2. It participates in cofactor biosynthesis; biotin biosynthesis. In terms of biological role, catalyzes the decarboxylative condensation of pimeloyl-[acyl-carrier protein] and L-alanine to produce 8-amino-7-oxononanoate (AON), [acyl-carrier protein], and carbon dioxide. The chain is 8-amino-7-oxononanoate synthase from Fervidobacterium nodosum (strain ATCC 35602 / DSM 5306 / Rt17-B1).